We begin with the raw amino-acid sequence, 412 residues long: Regulator of microtubule dynamics protein 2 (412 aa).

The chain crosses the membrane as a helical span at residues 9-28 (LLLGIMAGTAGISLLVLWYH). Ser-51 is modified (phosphoserine). Residues 72–110 (QLQILEKLNELLTNVEELKEEIKFLKETIPKLEECIQDE) are a coiled coil. At Ser-121 the chain carries Phosphoserine. The disordered stretch occupies residues 122–153 (PQHRARKKKTTTTTVQRPATSNSSEEAESEGG). At Thr-141 the chain carries Phosphothreonine. Tyr-154 is subject to Phosphotyrosine. Residues Thr-156 and Thr-159 each carry the phosphothreonine modification.

This sequence belongs to the RMDN family. As to quaternary structure, interacts with microtubules.

The protein resides in the membrane. It localises to the cytoplasm. It is found in the cytoskeleton. Its subcellular location is the spindle. The protein localises to the spindle pole. The sequence is that of Regulator of microtubule dynamics protein 2 (Rmdn2) from Rattus norvegicus (Rat).